The chain runs to 129 residues: Follitropin subunit beta (129 aa).

Residues 1–20 (MKSVQFCFLFCCWRAICCRS) form the signal peptide. Disulfide bonds link cysteine 21-cysteine 69, cysteine 35-cysteine 84, cysteine 38-cysteine 122, cysteine 46-cysteine 100, cysteine 50-cysteine 102, and cysteine 105-cysteine 112. Residues asparagine 25 and asparagine 42 are each glycosylated (N-linked (GlcNAc...) asparagine).

It belongs to the glycoprotein hormones subunit beta family. Heterodimer. The active follitropin is a heterodimer composed of an alpha chain/CGA shared with other hormones and a unique beta chain/FSHB shown here.

The protein resides in the secreted. In terms of biological role, together with the alpha chain CGA constitutes follitropin, the follicle-stimulating hormone, and provides its biological specificity to the hormone heterodimer. Binds FSHR, a G protein-coupled receptor, on target cells to activate downstream signaling pathways. Follitropin is involved in follicle development and spermatogenesis in reproductive organs. The chain is Follitropin subunit beta (FSHB) from Bos taurus (Bovine).